A 316-amino-acid chain; its full sequence is MSEQTTAGLPKAIFLMGPTASGKTALAIALRQALPVELISVDSALIYRGMDIGTAKPSAEELALAPHRLLDIRDPSEAYSAAEFRRDALVEMAEITRRGNIPLLVGGTMLYYKALLEGLSPLPSADPEVRQRIEQMAGEAGWEALHRQLCDIDPVAANRIHPNDPQRLSRALEVFFISGKTLTELTKISGEILPYDVSQFAIAPASRELIHQRIEQRFHQMLASGFEAEARALFARGDLHTEMPSIRCVGYRQMWSYLAGETDYDDMVYRGICATRQLAKRQMTWLRGWKDVHWLDSEQPDAAYSRVLQVLSAKPG.

17–24 is an ATP binding site; it reads GPTASGKT. Position 19–24 (19–24) interacts with substrate; the sequence is TASGKT. Interaction with substrate tRNA stretches follow at residues 42-45, 166-170, and 247-252; these read DSAL, QRLSR, and RCVGYR.

It belongs to the IPP transferase family. Monomer. Mg(2+) serves as cofactor.

The catalysed reaction is adenosine(37) in tRNA + dimethylallyl diphosphate = N(6)-dimethylallyladenosine(37) in tRNA + diphosphate. Catalyzes the transfer of a dimethylallyl group onto the adenine at position 37 in tRNAs that read codons beginning with uridine, leading to the formation of N6-(dimethylallyl)adenosine (i(6)A). The chain is tRNA dimethylallyltransferase from Erwinia tasmaniensis (strain DSM 17950 / CFBP 7177 / CIP 109463 / NCPPB 4357 / Et1/99).